The primary structure comprises 248 residues: D-xylose 1-dehydrogenase (248 aa).

The NAD(+) site is built by Asp42, Asp68, Asn91, Tyr156, Lys160, Val189, and Thr191. Tyr156 functions as the Proton acceptor in the catalytic mechanism.

The protein belongs to the short-chain dehydrogenases/reductases (SDR) family.

It catalyses the reaction D-xylose + NAD(+) = D-xylono-1,5-lactone + NADH + H(+). In terms of biological role, involved in the degradation of D-xylose. Catalyzes the initial reaction in the xylose utilization pathway by oxydizing D-xylose into D-xylonolactone. Shows some activity with L-arabinose and D-lyxose, but D-xylose is clearly the best substrate. Has no activity with D-ribose, D-glucose, D-galactose or D-mannose. This Caulobacter vibrioides (strain ATCC 19089 / CIP 103742 / CB 15) (Caulobacter crescentus) protein is D-xylose 1-dehydrogenase.